The chain runs to 163 residues: Lipoprotein signal peptidase (163 aa).

Transmembrane regions (helical) follow at residues 5–25 (VLTF…TKSL), 37–57 (IIPG…FGML), 67–87 (LMLV…VFKS), and 91–111 (LSNL…GNLY). Active-site residues include Asp-121 and Asp-139. Residues 132–152 (WPAFNVADASITIGIALFIGY) form a helical membrane-spanning segment.

Belongs to the peptidase A8 family.

It is found in the cell inner membrane. It catalyses the reaction Release of signal peptides from bacterial membrane prolipoproteins. Hydrolyzes -Xaa-Yaa-Zaa-|-(S,diacylglyceryl)Cys-, in which Xaa is hydrophobic (preferably Leu), and Yaa (Ala or Ser) and Zaa (Gly or Ala) have small, neutral side chains.. It participates in protein modification; lipoprotein biosynthesis (signal peptide cleavage). Its function is as follows. This protein specifically catalyzes the removal of signal peptides from prolipoproteins. The protein is Lipoprotein signal peptidase of Sulfurihydrogenibium sp. (strain YO3AOP1).